Here is a 230-residue protein sequence, read N- to C-terminus: Ureidoacrylate amidohydrolase RutB (230 aa).

Residue aspartate 24 is the Proton acceptor of the active site. Lysine 133 is an active-site residue. Cysteine 166 (nucleophile) is an active-site residue.

The protein belongs to the isochorismatase family. RutB subfamily.

It catalyses the reaction (Z)-3-ureidoacrylate + H2O + H(+) = (Z)-3-aminoacrylate + NH4(+) + CO2. The catalysed reaction is (Z)-3-ureidoacrylate + H2O = (Z)-3-aminoacrylate + carbamate + H(+). It carries out the reaction (Z)-2-methylureidoacrylate + H2O + H(+) = (Z)-2-methylaminoacrylate + NH4(+) + CO2. Functionally, hydrolyzes ureidoacrylate to form aminoacrylate and carbamate. The carbamate hydrolyzes spontaneously, thereby releasing one of the nitrogen atoms of the pyrimidine ring as ammonia and one of its carbon atoms as CO2. In Escherichia coli O127:H6 (strain E2348/69 / EPEC), this protein is Ureidoacrylate amidohydrolase RutB.